The chain runs to 298 residues: H-2 class I histocompatibility antigen, alpha chain (298 aa).

The Extracellular portion of the chain corresponds to 1 to 244 (RYEPRARWIE…EPPSSTKTNT (244 aa)). A glycan (N-linked (GlcNAc...) asparagine) is linked at N43. C58 and C121 are joined by a disulfide. Residue N133 is glycosylated (N-linked (GlcNAc...) asparagine). One can recognise an Ig-like C1-type domain in the interval 142–230 (PKAHVTHHRR…EGLPEPLTLR (89 aa)). The cysteines at positions 160 and 216 are disulfide-linked. The chain crosses the membrane as a helical span at residues 245–265 (VIIAVPVVLGAVVILGAVMAF). Topologically, residues 266-298 (VMKRRRNTGGKGGDYALAPVSQSSDMSLPDCKV) are cytoplasmic. Residues 277–298 (GGDYALAPVSQSSDMSLPDCKV) are disordered. S289 and S292 each carry phosphoserine.

The protein belongs to the MHC class I family. In terms of assembly, heterodimer of an alpha chain and a beta chain (beta-2-microglobulin).

Its subcellular location is the membrane. In terms of biological role, involved in the presentation of foreign antigens to the immune system. This chain is H-2 class I histocompatibility antigen, alpha chain (H2-D1), found in Mus musculus (Mouse).